A 760-amino-acid polypeptide reads, in one-letter code: Golgin subfamily A member 5 (760 aa).

Topologically, residues 1 to 727 are cytoplasmic; the sequence is MSWFVDLAGK…IFLRRYPMAR (727 aa). The span at 95-111 shows a compositional bias: polar residues; sequence VSSTTPLGSSSKASSNF. Disordered regions lie at residues 95 to 114, 126 to 216, and 432 to 456; these read VSST…FVRP, DFLN…SQAD, and TEEK…EYTK. Residues 135 to 146 show a composition bias toward basic and acidic residues; sequence QSEKKEVRRETV. The span at 148 to 166 shows a compositional bias: polar residues; that stretch reads KAFSPTGVSAQSQMPTVSL. Residues 174-201 show a composition bias toward low complexity; it reads PSVTPTPSSTQGLSRNSSLGSLSSSSHS. Residues 249–668 adopt a coiled-coil conformation; that stretch reads QGQEHVISNL…LQGGQNSASH (420 aa). Residues 441–450 show a composition bias toward polar residues; that stretch reads LQQQAKSSRS. A helical; Anchor for type IV membrane protein transmembrane segment spans residues 728-748; sequence VFVIIYMALLHLWVMIVLLTY. Residues 749-760 lie on the Extracellular side of the membrane; that stretch reads TPEMHHSHPDGR.

Its subcellular location is the golgi apparatus membrane. Involved in maintaining Golgi structure. Stimulates the formation of Golgi stacks and ribbons. Involved in intra-Golgi retrograde transport. The polypeptide is Golgin subfamily A member 5 (golga5) (Danio rerio (Zebrafish)).